The following is a 159-amino-acid chain: uncharacterized protein (159 aa).

The region spanning 4-153 (IKTDDLTHPA…HSRFLSLTLC (150 aa)) is the N-acetyltransferase domain.

Belongs to the acetyltransferase family.

This is an uncharacterized protein from Escherichia coli (strain K12).